A 266-amino-acid polypeptide reads, in one-letter code: UPF0294 protein YafD (266 aa).

Belongs to the UPF0294 family.

Its subcellular location is the cytoplasm. In Salmonella paratyphi C (strain RKS4594), this protein is UPF0294 protein YafD.